Reading from the N-terminus, the 174-residue chain is MALDNLKEGLPEYAKDLKLNLGTLSRSTELSEQQLWGTFLATAAATRNDTIISEIAEEASQHLSDEYVNAAYGAASIMAMNNVAYRAKSFLGSDYAQVRMGLRMNIINKSGIDKVDFELMALAVSTINGCHDCTKAHEKTVTSEGLTKEQVFEAVKIAATIQGVAQAIQIEAAR.

Residue Cys130 is the Proton donor of the active site. A disulfide bridge links Cys130 with Cys133. Cys133 (cysteine sulfenic acid (-SOH) intermediate) is an active-site residue.

Belongs to the AhpD family. Homotrimer.

It catalyses the reaction N(6)-[(R)-dihydrolipoyl]-L-lysyl-[lipoyl-carrier protein] + a hydroperoxide = N(6)-[(R)-lipoyl]-L-lysyl-[lipoyl-carrier protein] + an alcohol + H2O. In terms of biological role, antioxidant protein with alkyl hydroperoxidase activity. Required for the reduction of the AhpC active site cysteine residues and for the regeneration of the AhpC enzyme activity. The polypeptide is Alkyl hydroperoxide reductase AhpD (Corynebacterium kroppenstedtii (strain DSM 44385 / JCM 11950 / CIP 105744 / CCUG 35717)).